A 376-amino-acid chain; its full sequence is Eugenol O-methyltransferase (376 aa).

S-adenosyl-L-methionine contacts are provided by G219, D242, M263, and K276. H280 serves as the catalytic Proton acceptor.

It belongs to the class I-like SAM-binding methyltransferase superfamily. Cation-independent O-methyltransferase family. COMT subfamily. In terms of assembly, homodimer. As to expression, expressed predominantly in root hairs.

The enzyme catalyses (E)-isoeugenol + S-adenosyl-L-methionine = (E)-isomethyleugenol + S-adenosyl-L-homocysteine + H(+). In terms of biological role, O-methyltransferase. Substrate preference is eugenol &gt;&gt; orcinol monomethyl ether &gt; resorcinol monomethyl ether. The sequence is that of Eugenol O-methyltransferase (EOMT) from Sorghum bicolor (Sorghum).